A 314-amino-acid polypeptide reads, in one-letter code: Oxaloacetate tautomerase FAHD2A, mitochondrial (314 aa).

A mitochondrion-targeting transit peptide spans 1-84 (MLVSGRRRLL…ATLSVARRAL (84 aa)). Residues E159, E161, and D190 each contribute to the Mg(2+) site.

The protein belongs to the FAH family. Mg(2+) is required as a cofactor. The cofactor is Mn(2+).

The protein localises to the mitochondrion. It carries out the reaction oxaloacetate = enol-oxaloacetate. In terms of biological role, tautomerase that converts enol-oxaloacetate, a strong inhibitor of succinate dehydrogenase, to the physiological keto form of oxaloacetate. It is thereby required to maximize aerobic respiration efficiency by preventing succinate dehydrogenase inhibition. This Homo sapiens (Human) protein is Oxaloacetate tautomerase FAHD2A, mitochondrial.